The following is a 154-amino-acid chain: Minor structural pilin EpdC (154 aa).

A propeptide spanning residues Met-1 to Gly-13 is cleaved from the precursor. The QXSXEXXXL signature appears at Gln-14 to Leu-24.

In terms of processing, the N-terminus is cleaved by the prepilin peptidase EppA, which recognizes the class III signal sequence.

It localises to the secreted. Its subcellular location is the cell surface. The protein resides in the fimbrium. Its function is as follows. Minor component of the type IV-like pili. Essential for pili formation. The sequence is that of Minor structural pilin EpdC from Methanococcus maripaludis (strain DSM 14266 / JCM 13030 / NBRC 101832 / S2 / LL).